Reading from the N-terminus, the 432-residue chain is Adenylosuccinate synthetase (432 aa).

GTP contacts are provided by residues 13–19 and 41–43; these read GDEGKGK and GHT. Asp14 (proton acceptor) is an active-site residue. Mg(2+) is bound by residues Asp14 and Gly41. IMP contacts are provided by residues 14–17, 39–42, Thr130, Arg144, Gln225, Thr240, and Arg304; these read DEGK and NAGH. Catalysis depends on His42, which acts as the Proton donor. 300–306 is a binding site for substrate; it reads ATTGRSR. GTP-binding positions include Arg306, 332-334, and 415-417; these read KLD and STG.

This sequence belongs to the adenylosuccinate synthetase family. In terms of assembly, homodimer. Mg(2+) serves as cofactor.

The protein localises to the cytoplasm. It carries out the reaction IMP + L-aspartate + GTP = N(6)-(1,2-dicarboxyethyl)-AMP + GDP + phosphate + 2 H(+). The protein operates within purine metabolism; AMP biosynthesis via de novo pathway; AMP from IMP: step 1/2. In terms of biological role, plays an important role in the de novo pathway of purine nucleotide biosynthesis. Catalyzes the first committed step in the biosynthesis of AMP from IMP. The protein is Adenylosuccinate synthetase of Proteus mirabilis (strain HI4320).